The chain runs to 533 residues: E3 ubiquitin-protein ligase MGRN1 (533 aa).

Gly-2 is lipidated: N-myristoyl glycine. Residues 278-317 form an RING-type zinc finger; sequence ECVVCLSDLRDTLILPCRHLCLCTSCADTLRYQANNCPIC. The Required for TSG101-binding motif lies at 385–388; sequence PSAP. Phosphotyrosine is present on Tyr-390. The tract at residues 421 to 519 is disordered; the sequence is QKGKTQSKSP…QPVPPADIYL (99 aa). Over residues 423–439 the composition is skewed to polar residues; that stretch reads GKTQSKSPDSTLRSPSS. Phosphoserine occurs at positions 429, 450, and 502. The span at 443-454 shows a compositional bias: acidic residues; it reads EEDEEKLSEDPE.

In terms of assembly, interacts with MC1R and MC4R. Interacts with TSG101. Interacts with mislocalized cytosolically exposed PRNP; this interaction alters MGRN1 subcellular location and causes lysosomal enlargement. In terms of processing, autoubiquitinated in vitro.

It localises to the cytoplasm. It is found in the cytosol. Its subcellular location is the cell membrane. The protein resides in the early endosome. It carries out the reaction S-ubiquitinyl-[E2 ubiquitin-conjugating enzyme]-L-cysteine + [acceptor protein]-L-lysine = [E2 ubiquitin-conjugating enzyme]-L-cysteine + N(6)-ubiquitinyl-[acceptor protein]-L-lysine.. It participates in protein modification; protein ubiquitination. E3 ubiquitin-protein ligase. Mediates TSG101 monoubiquitination at multiple sites. Plays a role in the regulation of endosome-to-lysosome trafficking. Impairs MC1R- and MC4R-signaling by competing with GNAS-binding to MCRs and inhibiting agonist-induced cAMP production. Does not inhibit ADRB2-signaling. Does not promote MC1R ubiquitination. Also acts as a negative regulator of hedgehog signaling. The sequence is that of E3 ubiquitin-protein ligase MGRN1 (Mgrn1) from Rattus norvegicus (Rat).